The sequence spans 257 residues: Expansin-A10 (257 aa).

Residues 1 to 18 (MAPCLLLVLFLLPALATG) form the signal peptide. The Expansin-like EG45 domain occupies 50–163 (GGACGFGDLG…RRVNCLRDGG (114 aa)). The Expansin-like CBD domain maps to 173–252 (FFLTVLISNV…EWDFGKTYTG (80 aa)).

It belongs to the expansin family. Expansin A subfamily. In terms of tissue distribution, expressed in panicles and flowers.

The protein resides in the secreted. The protein localises to the cell wall. It is found in the membrane. Functionally, may cause loosening and extension of plant cell walls by disrupting non-covalent bonding between cellulose microfibrils and matrix glucans. No enzymatic activity has been found. May be required for rapid internodal elongation in deepwater rice during submergence. The protein is Expansin-A10 (EXPA10) of Oryza sativa subsp. japonica (Rice).